Consider the following 479-residue polypeptide: Probable periplasmic serine endoprotease DegP-like (479 aa).

The first 27 residues, 1–27 (MSMPSLKKYAAALFAVFLMGQSVAAHA), serve as a signal peptide directing secretion. Catalysis depends on charge relay system residues histidine 118, aspartate 148, and serine 221. Residues 219–221 (GNS) and 276–280 (LGVVI) contribute to the substrate site. 2 consecutive PDZ domains span residues 265-356 (LKAS…VREG) and 362-468 (KVAV…LRQG). Residues 368–390 (MPADDGDEATNDAAPSAERSSNR) are disordered.

This sequence belongs to the peptidase S1C family.

Its subcellular location is the periplasm. The catalysed reaction is Acts on substrates that are at least partially unfolded. The cleavage site P1 residue is normally between a pair of hydrophobic residues, such as Val-|-Val.. Its function is as follows. Might be efficient in the degradation of transiently denatured and unfolded proteins which accumulate in the periplasm following stress conditions. In Pseudomonas fulva (strain 12-X), this protein is Probable periplasmic serine endoprotease DegP-like.